A 357-amino-acid polypeptide reads, in one-letter code: 4-hydroxy-3-methylbut-2-en-1-yl diphosphate synthase (flavodoxin) (357 aa).

Residues Cys-265, Cys-268, Cys-300, and Glu-307 each contribute to the [4Fe-4S] cluster site.

The protein belongs to the IspG family. As to quaternary structure, homodimer. Requires [4Fe-4S] cluster as cofactor.

The catalysed reaction is (2E)-4-hydroxy-3-methylbut-2-enyl diphosphate + oxidized [flavodoxin] + H2O + 2 H(+) = 2-C-methyl-D-erythritol 2,4-cyclic diphosphate + reduced [flavodoxin]. It functions in the pathway isoprenoid biosynthesis; isopentenyl diphosphate biosynthesis via DXP pathway; isopentenyl diphosphate from 1-deoxy-D-xylulose 5-phosphate: step 5/6. In terms of biological role, converts 2C-methyl-D-erythritol 2,4-cyclodiphosphate (ME-2,4cPP) into 1-hydroxy-2-methyl-2-(E)-butenyl 4-diphosphate. The protein is 4-hydroxy-3-methylbut-2-en-1-yl diphosphate synthase (flavodoxin) of Aquifex aeolicus (strain VF5).